The following is a 774-amino-acid chain: Phosphoribosylformylglycinamidine synthase subunit PurL (774 aa).

Histidine 51 is an active-site residue. Positions 54 and 93 each coordinate ATP. Glutamate 95 is a Mg(2+) binding site. Substrate contacts are provided by residues 96–99 and arginine 118; that span reads SHNH. The active-site Proton acceptor is the histidine 97. Residue aspartate 119 participates in Mg(2+) binding. Residue glutamine 242 coordinates substrate. A Mg(2+)-binding site is contributed by aspartate 270. Residue 314-316 participates in substrate binding; it reads ESQ. Aspartate 514 and glycine 551 together coordinate ATP. Asparagine 552 contributes to the Mg(2+) binding site. Serine 554 is a substrate binding site.

This sequence belongs to the FGAMS family. As to quaternary structure, monomer. Part of the FGAM synthase complex composed of 1 PurL, 1 PurQ and 2 PurS subunits.

The protein localises to the cytoplasm. It carries out the reaction N(2)-formyl-N(1)-(5-phospho-beta-D-ribosyl)glycinamide + L-glutamine + ATP + H2O = 2-formamido-N(1)-(5-O-phospho-beta-D-ribosyl)acetamidine + L-glutamate + ADP + phosphate + H(+). It functions in the pathway purine metabolism; IMP biosynthesis via de novo pathway; 5-amino-1-(5-phospho-D-ribosyl)imidazole from N(2)-formyl-N(1)-(5-phospho-D-ribosyl)glycinamide: step 1/2. Part of the phosphoribosylformylglycinamidine synthase complex involved in the purines biosynthetic pathway. Catalyzes the ATP-dependent conversion of formylglycinamide ribonucleotide (FGAR) and glutamine to yield formylglycinamidine ribonucleotide (FGAM) and glutamate. The FGAM synthase complex is composed of three subunits. PurQ produces an ammonia molecule by converting glutamine to glutamate. PurL transfers the ammonia molecule to FGAR to form FGAM in an ATP-dependent manner. PurS interacts with PurQ and PurL and is thought to assist in the transfer of the ammonia molecule from PurQ to PurL. The protein is Phosphoribosylformylglycinamidine synthase subunit PurL of Gloeobacter violaceus (strain ATCC 29082 / PCC 7421).